Here is a 190-residue protein sequence, read N- to C-terminus: Heme-binding protein 1 (190 aa).

The protein belongs to the HEBP family. In terms of assembly, monomer. In terms of tissue distribution, ubiquitously expressed. Extremely abundant in liver.

Its subcellular location is the cytoplasm. In terms of biological role, may bind free porphyrinogens that may be present in the cell and thus facilitate removal of these potentially toxic compound. Binds with a high affinity to one molecule of heme or porphyrins. It binds metalloporphyrins, free porphyrins and N-methylprotoporphyrin with similar affinities. The protein is Heme-binding protein 1 (Hebp1) of Mus musculus (Mouse).